Reading from the N-terminus, the 158-residue chain is 6,7-dimethyl-8-ribityllumazine synthase (158 aa).

5-amino-6-(D-ribitylamino)uracil contacts are provided by residues F18, 50–52 (SYD), and 74–76 (AVI). Position 79 to 80 (79 to 80 (ET)) interacts with (2S)-2-hydroxy-3-oxobutyl phosphate. H82 functions as the Proton donor in the catalytic mechanism. L107 contributes to the 5-amino-6-(D-ribitylamino)uracil binding site. (2S)-2-hydroxy-3-oxobutyl phosphate is bound at residue R122.

Belongs to the DMRL synthase family.

The enzyme catalyses (2S)-2-hydroxy-3-oxobutyl phosphate + 5-amino-6-(D-ribitylamino)uracil = 6,7-dimethyl-8-(1-D-ribityl)lumazine + phosphate + 2 H2O + H(+). It functions in the pathway cofactor biosynthesis; riboflavin biosynthesis; riboflavin from 2-hydroxy-3-oxobutyl phosphate and 5-amino-6-(D-ribitylamino)uracil: step 1/2. Catalyzes the formation of 6,7-dimethyl-8-ribityllumazine by condensation of 5-amino-6-(D-ribitylamino)uracil with 3,4-dihydroxy-2-butanone 4-phosphate. This is the penultimate step in the biosynthesis of riboflavin. This chain is 6,7-dimethyl-8-ribityllumazine synthase, found in Sulfolobus acidocaldarius (strain ATCC 33909 / DSM 639 / JCM 8929 / NBRC 15157 / NCIMB 11770).